Reading from the N-terminus, the 308-residue chain is 4-hydroxy-3-methylbut-2-enyl diphosphate reductase (308 aa).

Cysteine 12 serves as a coordination point for [4Fe-4S] cluster. (2E)-4-hydroxy-3-methylbut-2-enyl diphosphate contacts are provided by histidine 43 and histidine 77. Dimethylallyl diphosphate-binding residues include histidine 43 and histidine 77. Isopentenyl diphosphate contacts are provided by histidine 43 and histidine 77. Cysteine 99 contributes to the [4Fe-4S] cluster binding site. Histidine 127 provides a ligand contact to (2E)-4-hydroxy-3-methylbut-2-enyl diphosphate. Residue histidine 127 coordinates dimethylallyl diphosphate. Histidine 127 contacts isopentenyl diphosphate. The active-site Proton donor is glutamate 129. (2E)-4-hydroxy-3-methylbut-2-enyl diphosphate is bound at residue threonine 167. [4Fe-4S] cluster is bound at residue cysteine 197. The (2E)-4-hydroxy-3-methylbut-2-enyl diphosphate site is built by serine 225, serine 226, asparagine 227, and serine 269. Positions 225, 226, 227, and 269 each coordinate dimethylallyl diphosphate. Residues serine 225, serine 226, asparagine 227, and serine 269 each coordinate isopentenyl diphosphate.

The protein belongs to the IspH family. It depends on [4Fe-4S] cluster as a cofactor.

It carries out the reaction isopentenyl diphosphate + 2 oxidized [2Fe-2S]-[ferredoxin] + H2O = (2E)-4-hydroxy-3-methylbut-2-enyl diphosphate + 2 reduced [2Fe-2S]-[ferredoxin] + 2 H(+). The catalysed reaction is dimethylallyl diphosphate + 2 oxidized [2Fe-2S]-[ferredoxin] + H2O = (2E)-4-hydroxy-3-methylbut-2-enyl diphosphate + 2 reduced [2Fe-2S]-[ferredoxin] + 2 H(+). It participates in isoprenoid biosynthesis; dimethylallyl diphosphate biosynthesis; dimethylallyl diphosphate from (2E)-4-hydroxy-3-methylbutenyl diphosphate: step 1/1. Its pathway is isoprenoid biosynthesis; isopentenyl diphosphate biosynthesis via DXP pathway; isopentenyl diphosphate from 1-deoxy-D-xylulose 5-phosphate: step 6/6. Functionally, catalyzes the conversion of 1-hydroxy-2-methyl-2-(E)-butenyl 4-diphosphate (HMBPP) into a mixture of isopentenyl diphosphate (IPP) and dimethylallyl diphosphate (DMAPP). Acts in the terminal step of the DOXP/MEP pathway for isoprenoid precursor biosynthesis. This chain is 4-hydroxy-3-methylbut-2-enyl diphosphate reductase, found in Wolbachia pipientis subsp. Culex pipiens (strain wPip).